Reading from the N-terminus, the 302-residue chain is Sulfate adenylyltransferase subunit 2 (302 aa).

It belongs to the PAPS reductase family. CysD subfamily. In terms of assembly, heterodimer composed of CysD, the smaller subunit, and CysN.

It catalyses the reaction sulfate + ATP + H(+) = adenosine 5'-phosphosulfate + diphosphate. It participates in sulfur metabolism; hydrogen sulfide biosynthesis; sulfite from sulfate: step 1/3. With CysN forms the ATP sulfurylase (ATPS) that catalyzes the adenylation of sulfate producing adenosine 5'-phosphosulfate (APS) and diphosphate, the first enzymatic step in sulfur assimilation pathway. APS synthesis involves the formation of a high-energy phosphoric-sulfuric acid anhydride bond driven by GTP hydrolysis by CysN coupled to ATP hydrolysis by CysD. The chain is Sulfate adenylyltransferase subunit 2 from Proteus mirabilis (strain HI4320).